The following is a 466-amino-acid chain: MENKKENFSEWYNEIIDLAKLSDKRYAIKGMNVWLPYGLKIMRLIDNIIRDNVDNKSFQEVSFPVLITRSQLETEFEHIKGFENEIYWVTKGGSEKLDIELALRPTSESAMYTMFPLWIRSHQDLPLKIYQIVSVYRYETKHTRSFIRVREIHFFEAHTAHVDYGDAERQMSEYMDIWSSIAEKLCLPYNIDMRPDWDKFPGAKYTLAFDTLMPSGRSLQIGTIHEYGENFARNYDIKYLDINGDLKYVSQTTFGLSERLLAAVIGIHGDDTGLILPASIAPVQAIIIPIPGKSFKEVLDYSGKILSMLKDINVRAEIDSRENYTPGYKYNDWEMRGVPLRIEIGSREMESSTVTVVSRLNKKRLNISIKEINNIKNMLNEHDKQLTLNAWKMMEENTVFIDDINNIPMNKDVLIKAYWCGSRECSDALEQKKDVTALGTLYNLNDSGKCIVCGNPGRLSMFARSY.

The protein belongs to the class-II aminoacyl-tRNA synthetase family. ProS type 3 subfamily. Homodimer.

Its subcellular location is the cytoplasm. The catalysed reaction is tRNA(Pro) + L-proline + ATP = L-prolyl-tRNA(Pro) + AMP + diphosphate. Functionally, catalyzes the attachment of proline to tRNA(Pro) in a two-step reaction: proline is first activated by ATP to form Pro-AMP and then transferred to the acceptor end of tRNA(Pro). The protein is Proline--tRNA ligase of Picrophilus torridus (strain ATCC 700027 / DSM 9790 / JCM 10055 / NBRC 100828 / KAW 2/3).